The chain runs to 165 residues: HTH-type transcriptional regulator IscR (165 aa).

In terms of domain architecture, HTH rrf2-type spans 2–131 (RLTSKGRYAV…NNITLAELVN (130 aa)). The H-T-H motif DNA-binding region spans 28–51 (LADISERQGISLSYLEQLFSRLRK). Residues cysteine 92, cysteine 98, and cysteine 104 each contribute to the [2Fe-2S] cluster site.

It depends on [2Fe-2S] cluster as a cofactor.

Regulates the transcription of several operons and genes involved in the biogenesis of Fe-S clusters and Fe-S-containing proteins. The sequence is that of HTH-type transcriptional regulator IscR from Erwinia tasmaniensis (strain DSM 17950 / CFBP 7177 / CIP 109463 / NCPPB 4357 / Et1/99).